Here is a 451-residue protein sequence, read N- to C-terminus: Tubulin alpha-2 chain (451 aa).

Gln-11 contacts GTP. The residue at position 40 (Lys-40) is an N6-acetyllysine. The GTP site is built by Glu-71, Gly-144, Thr-145, Thr-179, Asn-206, and Asn-228. Glu-71 provides a ligand contact to Mg(2+). The active site involves Glu-254.

Belongs to the tubulin family. In terms of assembly, dimer of alpha and beta chains. A typical microtubule is a hollow water-filled tube with an outer diameter of 25 nm and an inner diameter of 15 nM. Alpha-beta heterodimers associate head-to-tail to form protofilaments running lengthwise along the microtubule wall with the beta-tubulin subunit facing the microtubule plus end conferring a structural polarity. Microtubules usually have 13 protofilaments but different protofilament numbers can be found in some organisms and specialized cells. The cofactor is Mg(2+). In terms of processing, undergoes a tyrosination/detyrosination cycle, the cyclic removal and re-addition of a C-terminal tyrosine residue by the enzymes tubulin tyrosine carboxypeptidase (TTCP) and tubulin tyrosine ligase (TTL), respectively.

It localises to the cytoplasm. The protein localises to the cytoskeleton. It carries out the reaction GTP + H2O = GDP + phosphate + H(+). In terms of biological role, tubulin is the major constituent of microtubules, a cylinder consisting of laterally associated linear protofilaments composed of alpha- and beta-tubulin heterodimers. Microtubules grow by the addition of GTP-tubulin dimers to the microtubule end, where a stabilizing cap forms. Below the cap, tubulin dimers are in GDP-bound state, owing to GTPase activity of alpha-tubulin. This chain is Tubulin alpha-2 chain (TUBA2), found in Chlamydomonas reinhardtii (Chlamydomonas smithii).